The sequence spans 372 residues: Alanine dehydrogenase 1 (372 aa).

The active site involves His-94. 170-200 lines the NAD(+) pocket; that stretch reads TYVIFGGGVAATNAANVALGLNAKVIIIELN.

Belongs to the AlaDH/PNT family.

The catalysed reaction is L-alanine + NAD(+) + H2O = pyruvate + NH4(+) + NADH + H(+). It functions in the pathway amino-acid degradation; L-alanine degradation via dehydrogenase pathway; NH(3) and pyruvate from L-alanine: step 1/1. In terms of biological role, may play a role in cell wall synthesis as L-alanine is an important constituent of the peptidoglycan layer. This Staphylococcus aureus (strain MRSA252) protein is Alanine dehydrogenase 1 (ald1).